Consider the following 1247-residue polypeptide: Leucine-rich repeat-containing protein 53 (1247 aa).

LRR repeat units lie at residues 34 to 55 (TTRV…NLSL), 58 to 79 (NLAL…ALHG), 82 to 102 (MLRT…TDHT), 108 to 129 (SLQV…WFRN), 132 to 153 (GLTR…SFGG), 158 to 179 (SLRY…AFRP), and 182 to 203 (QLQE…FTPL). In terms of domain architecture, LRRCT spans 214–271 (NQWSCTCDLHPLARFLRNYIKSSAHTLRNAKDLNCQPSTAAVAAAQSVLRLSETNCDS). Residues 294–314 (LLTVLGFAGAVGLTCLGLVVF) traverse the membrane as a helical segment. Disordered stretches follow at residues 828-866 (SAGH…EDAT), 887-927 (VLPF…SPRN), and 1223-1247 (ENSA…LETE). Polar residues-rich tracts occupy residues 898–927 (DQGT…SPRN) and 1238–1247 (YATTSPLETE).

Its subcellular location is the membrane. The sequence is that of Leucine-rich repeat-containing protein 53 (LRRC53) from Homo sapiens (Human).